We begin with the raw amino-acid sequence, 483 residues long: tRNA sulfurtransferase (483 aa).

In terms of domain architecture, THUMP spans 62–166; sequence PQICDALTRV…QDKLTLIKAR (105 aa). ATP-binding positions include 184-185, Lys266, Gly288, and Gln297; that span reads LI. Cys345 and Cys457 form a disulfide bridge. The region spanning 405 to 483 is the Rhodanese domain; the sequence is LADTDVLLDI…GYTNVKVYRP (79 aa). The active-site Cysteine persulfide intermediate is Cys457.

It belongs to the ThiI family.

Its subcellular location is the cytoplasm. The catalysed reaction is [ThiI sulfur-carrier protein]-S-sulfanyl-L-cysteine + a uridine in tRNA + 2 reduced [2Fe-2S]-[ferredoxin] + ATP + H(+) = [ThiI sulfur-carrier protein]-L-cysteine + a 4-thiouridine in tRNA + 2 oxidized [2Fe-2S]-[ferredoxin] + AMP + diphosphate. It carries out the reaction [ThiS sulfur-carrier protein]-C-terminal Gly-Gly-AMP + S-sulfanyl-L-cysteinyl-[cysteine desulfurase] + AH2 = [ThiS sulfur-carrier protein]-C-terminal-Gly-aminoethanethioate + L-cysteinyl-[cysteine desulfurase] + A + AMP + 2 H(+). It participates in cofactor biosynthesis; thiamine diphosphate biosynthesis. Its function is as follows. Catalyzes the ATP-dependent transfer of a sulfur to tRNA to produce 4-thiouridine in position 8 of tRNAs, which functions as a near-UV photosensor. Also catalyzes the transfer of sulfur to the sulfur carrier protein ThiS, forming ThiS-thiocarboxylate. This is a step in the synthesis of thiazole, in the thiamine biosynthesis pathway. The sulfur is donated as persulfide by IscS. This is tRNA sulfurtransferase from Yersinia enterocolitica serotype O:8 / biotype 1B (strain NCTC 13174 / 8081).